Here is a 454-residue protein sequence, read N- to C-terminus: Tubulin beta-3 chain (454 aa).

The GTP site is built by Gln11, Glu75, Ser144, Gly148, Thr149, Gly150, Asn210, and Asn232. Mg(2+) is bound at residue Glu75. The interval 435 to 454 (TADDEFDPEVNQEEVEGDCI) is disordered.

This sequence belongs to the tubulin family. Dimer of alpha and beta chains. A typical microtubule is a hollow water-filled tube with an outer diameter of 25 nm and an inner diameter of 15 nM. Alpha-beta heterodimers associate head-to-tail to form protofilaments running lengthwise along the microtubule wall with the beta-tubulin subunit facing the microtubule plus end conferring a structural polarity. Microtubules usually have 13 protofilaments but different protofilament numbers can be found in some organisms and specialized cells. Mg(2+) is required as a cofactor.

Its subcellular location is the cytoplasm. It is found in the cytoskeleton. Tubulin is the major constituent of microtubules, a cylinder consisting of laterally associated linear protofilaments composed of alpha- and beta-tubulin heterodimers. Microtubules grow by the addition of GTP-tubulin dimers to the microtubule end, where a stabilizing cap forms. Below the cap, tubulin dimers are in GDP-bound state, owing to GTPase activity of alpha-tubulin. This Drosophila melanogaster (Fruit fly) protein is Tubulin beta-3 chain (betaTub60D).